Reading from the N-terminus, the 641-residue chain is MGRRSTSSTKSGKFMNPTDQARKEARKRELKKNKKQRMMVRAAVLKMKDPKQIIRDMEKLDEMEFNPVQQPQLNEKVLKDKRKKLRETFERILRLYEKENPDIYKELRKLEVEYEQKRAQLSQYFDAVKNAQHVEVESIPLPDMPHAPSNILIQDIPLPGAQPPSILKKTSAYGPPTRAVSILPLLGHGVPRLPPGRKPPGPPPGPPPPQVVQMYGRKVGFALDLPPRRRDEDMLYSPELAQRGHDDDVSSTSEDDGYPEDMDQDKHDDSTDDSDTDKSDGESDGDEFVHRDNGERDNNEEKKSGLSVRFADMPGKSRKKKKNMKELTPLQAMMLRMAGQEIPEEGREVEEFSEDDDEDDSDDSEAEKQSQKQHKEESHSDGTSTASSQQQAPPQSVPPSQIQAPPMPGPPPLGPPPAPPLRPPGPPTGLPPGPPPGAPPFLRPPGMPGLRGPLPRLLPPGPPPGRPPGPPPGPPPGLPPGPPPRGPPPRLPPPAPPGIPPPRPGMMRPPLVPPLGPAPPGLFPPAPLPNPGVLSAPPNLIQRPKADDTSAATIEKKATATISAKPQITNPKAEITRFVPTALRVRRENKGATAAPQRKSEDDSAVPLAKAAPKSGPSVPVSVQTKDDVYEAFMKEMEGLL.

Positions 1-11 (MGRRSTSSTKS) are enriched in polar residues. Positions 1–37 (MGRRSTSSTKSGKFMNPTDQARKEARKRELKKNKKQR) are disordered. The tract at residues 1-45 (MGRRSTSSTKSGKFMNPTDQARKEARKRELKKNKKQRMMVRAAVL) is required for nuclear import. Position 13 is an N6-acetyllysine (K13). Positions 28–37 (RELKKNKKQR) are enriched in basic residues. Positions 75 to 133 (EKVLKDKRKKLRETFERILRLYEKENPDIYKELRKLEVEYEQKRAQLSQYFDAVKNAQH) form a coiled coil. Position 181 is a phosphoserine (S181). The interval 186–213 (LGHGVPRLPPGRKPPGPPPGPPPPQVVQ) is disordered. At R192 the chain carries Omega-N-methylarginine. The span at 192-210 (RLPPGRKPPGPPPGPPPPQ) shows a compositional bias: pro residues. Residues 217 to 221 (RKVGF) are interaction with PP1. Position 236 is a phosphotyrosine (Y236). Positions 236 to 552 (YSPELAQRGH…RPKADDTSAA (317 aa)) are disordered. S237 carries the phosphoserine modification. A compositionally biased stretch (acidic residues) spans 253–263 (SEDDGYPEDMD). Over residues 276-304 (TDKSDGESDGDEFVHRDNGERDNNEEKKS) the composition is skewed to basic and acidic residues. A phosphoserine mark is found at S279 and S283. Residues 306 to 310 (LSVRF) form an interaction with PP1 region. A compositionally biased stretch (acidic residues) spans 351–365 (EFSEDDDEDDSDDSE). A phosphoserine mark is found at S353, S361, and S364. Residues 366-380 (AEKQSQKQHKEESHS) are compositionally biased toward basic and acidic residues. A compositionally biased stretch (low complexity) spans 386–404 (ASSQQQAPPQSVPPSQIQA). Pro residues-rich tracts occupy residues 405-447 (PPMP…PPGM), 456-504 (RLLP…PPRP), and 510-530 (PLVP…PLPN). Positions 455-466 (PRLLPPGPPPGR) match the PGR motif. A Glycyl lysine isopeptide (Lys-Gly) (interchain with G-Cter in SUMO2) cross-link involves residue K557. The residue at position 565 (K565) is an N6-acetyllysine. K572 participates in a covalent cross-link: Glycyl lysine isopeptide (Lys-Gly) (interchain with G-Cter in SUMO2). Residues 587–623 (RENKGATAAPQRKSEDDSAVPLAKAAPKSGPSVPVSV) are disordered. Position 600 is a phosphoserine (S600).

Interacts with PPP1CA, PPP1CB and PPP1CC. Interacts via the PGR motif with PQBP1 in the nucleus. Interacts with the WW domains of WBP4. Ubiquitous. Highly expressed in the heart, pancreas, kidney skeletal muscle, placenta and brain (at protein level). Weakly expressed in liver and lung.

It localises to the nucleus. The protein localises to the cytoplasm. In terms of biological role, activates pre-mRNA splicing. May inhibit PP1 phosphatase activity. This Homo sapiens (Human) protein is WW domain-binding protein 11.